Here is a 444-residue protein sequence, read N- to C-terminus: Phosphomethylpyrimidine synthase (444 aa).

Substrate is bound by residues N80, M109, Y138, H174, 194–196 (SRG), 235–238 (DSLR), and E274. H278 is a Zn(2+) binding site. Y301 serves as a coordination point for substrate. H342 is a binding site for Zn(2+). [4Fe-4S] cluster-binding residues include C422, C425, and C430.

This sequence belongs to the ThiC family. In terms of assembly, homodimer. [4Fe-4S] cluster serves as cofactor.

The catalysed reaction is 5-amino-1-(5-phospho-beta-D-ribosyl)imidazole + S-adenosyl-L-methionine = 4-amino-2-methyl-5-(phosphooxymethyl)pyrimidine + CO + 5'-deoxyadenosine + formate + L-methionine + 3 H(+). Its pathway is cofactor biosynthesis; thiamine diphosphate biosynthesis. In terms of biological role, catalyzes the synthesis of the hydroxymethylpyrimidine phosphate (HMP-P) moiety of thiamine from aminoimidazole ribotide (AIR) in a radical S-adenosyl-L-methionine (SAM)-dependent reaction. In Nitratiruptor sp. (strain SB155-2), this protein is Phosphomethylpyrimidine synthase.